Reading from the N-terminus, the 410-residue chain is MARAKFERTKPHVNIGTIGHVDHGKTTLTAAITMALAAQGKAKARKYADIDAAPEEKARGITINTAHVEYETDDRHYAHVDCPGHADYVKNMITGAAQMDGGILVVSAADGPMPQTREHILLAKQVGVPNLVVFLNKEDMVDDEELLELVELEVRELLSEYEFPGDDIPIVKGSALKAVEALTDTPTIKKGDNDWVDKILALMDEVDAYIPTPERDIDKPFLMAIEDVFSISGRGTVATGRIERGKIKAGETVEIVGIKEKTKSTTVTGVEMFQKTLEEGLAGDNVGLLLRGVQKEEIERGMVIAKPGSIKPHTQFEGEVYVLTKEEGGRHTPFFKNYRPQFYVRTTDVTGTIVDYTADDGSAVEMVMPGDRIKMTVELINPIAIEQGMRFAIREGGRTIGAGVVSKIIQ.

Positions 10 to 214 (KPHVNIGTIG…EVDAYIPTPE (205 aa)) constitute a tr-type G domain. The tract at residues 19-26 (GHVDHGKT) is G1. Position 19 to 26 (19 to 26 (GHVDHGKT)) interacts with GTP. Mg(2+) is bound at residue Thr-26. The segment at 60–64 (GITIN) is G2. Positions 81-84 (DCPG) are G3. GTP contacts are provided by residues 81–85 (DCPGH) and 136–139 (NKED). Residues 136–139 (NKED) are G4. The G5 stretch occupies residues 174–176 (SAL).

The protein belongs to the TRAFAC class translation factor GTPase superfamily. Classic translation factor GTPase family. EF-Tu/EF-1A subfamily. As to quaternary structure, monomer.

It localises to the cytoplasm. It catalyses the reaction GTP + H2O = GDP + phosphate + H(+). Functionally, GTP hydrolase that promotes the GTP-dependent binding of aminoacyl-tRNA to the A-site of ribosomes during protein biosynthesis. This chain is Elongation factor Tu, found in Gloeothece citriformis (strain PCC 7424) (Cyanothece sp. (strain PCC 7424)).